The primary structure comprises 135 residues: MEWNTLVLGLLVLSVVASSNNTSTASTPRPSSSTHASTTVKATTVATTSTTTATSTSSTTSAKPGSTTHDPNVMRPHAHNDFYNAHCTSHMYELSLSSFAAWWTMLNALILMGAFCIVLRHCCFQNFTATTTKGY.

The signal sequence occupies residues 1–19 (MEWNTLVLGLLVLSVVASS). Topologically, residues 20-98 (NNTSTASTPR…SHMYELSLSS (79 aa)) are virion surface. Low complexity predominate over residues 21–68 (NTSTASTPRPSSSTHASTTVKATTVATTSTTTATSTSSTTSAKPGSTT). Positions 21-73 (NTSTASTPRPSSSTHASTTVKATTVATTSTTTATSTSSTTSAKPGSTTHDPNV) are disordered. A helical transmembrane segment spans residues 99–119 (FAAWWTMLNALILMGAFCIVL). At 120 to 135 (RHCCFQNFTATTTKGY) the chain is on the intravirion side.

This sequence belongs to the herpesviridae glycoprotein N family. As to quaternary structure, interacts (via N-terminus) with gM (via N-terminus). The gM-gN heterodimer forms the gCII complex. Post-translationally, O-glycosylated.

Its subcellular location is the virion membrane. The protein localises to the host membrane. The protein resides in the host Golgi apparatus. It is found in the host trans-Golgi network. Functionally, envelope glycoprotein necessary for proper maturation of gM and modulation of its membrane fusion activity. Also plays a critical role in virion morphogenesis. This Homo sapiens (Human) protein is Envelope glycoprotein N.